The following is a 141-amino-acid chain: Hemoglobin subunit alpha-D (141 aa).

Residues 1–141 (VLTAEDRRLL…VADVLSEKYR (141 aa)) enclose the Globin domain. Histidine 57 and histidine 87 together coordinate heme b.

The protein belongs to the globin family. The deoxy-Hb is a heterotetramer of two alpha and two beta chains, but oxygenation results in dissociation to dimers. As to expression, red blood cells.

Involved in oxygen transport from the lung to the various peripheral tissues. The sequence is that of Hemoglobin subunit alpha-D (HBAD) from Erythrolamprus miliaris (South American water snake).